The chain runs to 219 residues: Octanoyltransferase (219 aa).

The region spanning 32–207 is the BPL/LPL catalytic domain; the sequence is ENSQDEIWIV…TLSQELGLDK (176 aa). Substrate contacts are provided by residues 71–78, 138–140, and 151–153; these read RGGQVTYH, SLG, and GLA. Cys-169 acts as the Acyl-thioester intermediate in catalysis.

Belongs to the LipB family.

It is found in the cytoplasm. The enzyme catalyses octanoyl-[ACP] + L-lysyl-[protein] = N(6)-octanoyl-L-lysyl-[protein] + holo-[ACP] + H(+). Its pathway is protein modification; protein lipoylation via endogenous pathway; protein N(6)-(lipoyl)lysine from octanoyl-[acyl-carrier-protein]: step 1/2. In terms of biological role, catalyzes the transfer of endogenously produced octanoic acid from octanoyl-acyl-carrier-protein onto the lipoyl domains of lipoate-dependent enzymes. Lipoyl-ACP can also act as a substrate although octanoyl-ACP is likely to be the physiological substrate. This Shewanella pealeana (strain ATCC 700345 / ANG-SQ1) protein is Octanoyltransferase.